The primary structure comprises 338 residues: Ketol-acid reductoisomerase (NADP(+)) (338 aa).

The 181-residue stretch at 1 to 181 folds into the KARI N-terminal Rossmann domain; sequence MKVFYDKDCD…GGGRAGIIET (181 aa). NADP(+) is bound by residues 24 to 27, R47, and S52; that span reads YGSQ. H107 is a catalytic residue. G133 lines the NADP(+) pocket. Residues 182–327 enclose the KARI C-terminal knotted domain; sequence NFREETETDL…GKLRAMMPWI (146 aa). Mg(2+) contacts are provided by D190, E194, E226, and E230. S251 contributes to the substrate binding site.

The protein belongs to the ketol-acid reductoisomerase family. Requires Mg(2+) as cofactor.

It carries out the reaction (2R)-2,3-dihydroxy-3-methylbutanoate + NADP(+) = (2S)-2-acetolactate + NADPH + H(+). It catalyses the reaction (2R,3R)-2,3-dihydroxy-3-methylpentanoate + NADP(+) = (S)-2-ethyl-2-hydroxy-3-oxobutanoate + NADPH + H(+). It participates in amino-acid biosynthesis; L-isoleucine biosynthesis; L-isoleucine from 2-oxobutanoate: step 2/4. Its pathway is amino-acid biosynthesis; L-valine biosynthesis; L-valine from pyruvate: step 2/4. Involved in the biosynthesis of branched-chain amino acids (BCAA). Catalyzes an alkyl-migration followed by a ketol-acid reduction of (S)-2-acetolactate (S2AL) to yield (R)-2,3-dihydroxy-isovalerate. In the isomerase reaction, S2AL is rearranged via a Mg-dependent methyl migration to produce 3-hydroxy-3-methyl-2-ketobutyrate (HMKB). In the reductase reaction, this 2-ketoacid undergoes a metal-dependent reduction by NADPH to yield (R)-2,3-dihydroxy-isovalerate. In Bordetella pertussis (strain Tohama I / ATCC BAA-589 / NCTC 13251), this protein is Ketol-acid reductoisomerase (NADP(+)).